We begin with the raw amino-acid sequence, 79 residues long: D-alanyl carrier protein (79 aa).

In terms of domain architecture, Carrier spans 1–77; sequence MDVKETILNI…KIISGVVELM (77 aa). S35 carries the O-(pantetheine 4'-phosphoryl)serine modification.

The protein belongs to the DltC family. In terms of processing, 4'-phosphopantetheine is transferred from CoA to a specific serine of apo-DCP.

The protein resides in the cytoplasm. Its pathway is cell wall biogenesis; lipoteichoic acid biosynthesis. In terms of biological role, carrier protein involved in the D-alanylation of lipoteichoic acid (LTA). The loading of thioester-linked D-alanine onto DltC is catalyzed by D-alanine--D-alanyl carrier protein ligase DltA. The DltC-carried D-alanyl group is further transferred to cell membrane phosphatidylglycerol (PG) by forming an ester bond, probably catalyzed by DltD. D-alanylation of LTA plays an important role in modulating the properties of the cell wall in Gram-positive bacteria, influencing the net charge of the cell wall. This chain is D-alanyl carrier protein, found in Streptococcus suis (strain 98HAH33).